The sequence spans 131 residues: MCQLDVASIGDIASYRLSPISKLRYLRHTESPKSPKSSIAIPRKRYKRYRQISRMPKNHFWKNGDISYTETHIGDIFNMPYFQISIFPISPSLSAINTTIARHEFSRRQKSQNAYFGQTHILLFTAAYSPF.

This is an uncharacterized protein from Homo sapiens (Human).